Consider the following 200-residue polypeptide: HVA22-like protein k (200 aa).

Positions 176–200 (LGEIANGSPVSETNSDSESDSNHED) are disordered.

It belongs to the DP1 family.

The sequence is that of HVA22-like protein k (HVA22K) from Arabidopsis thaliana (Mouse-ear cress).